A 695-amino-acid chain; its full sequence is Elongation factor G (695 aa).

The 275-residue stretch at 8 to 282 folds into the tr-type G domain; sequence KDTRNIGIMA…AIVDYMPAPI (275 aa). GTP is bound by residues 17–24, 81–85, and 135–138; these read AHIDAGKT, DTPGH, and NKMD. The interval 285–304 is disordered; the sequence is PDIKGVDPQTDEPTTRKSSD.

This sequence belongs to the TRAFAC class translation factor GTPase superfamily. Classic translation factor GTPase family. EF-G/EF-2 subfamily.

The protein localises to the cytoplasm. Catalyzes the GTP-dependent ribosomal translocation step during translation elongation. During this step, the ribosome changes from the pre-translocational (PRE) to the post-translocational (POST) state as the newly formed A-site-bound peptidyl-tRNA and P-site-bound deacylated tRNA move to the P and E sites, respectively. Catalyzes the coordinated movement of the two tRNA molecules, the mRNA and conformational changes in the ribosome. This Finegoldia magna (strain ATCC 29328 / DSM 20472 / WAL 2508) (Peptostreptococcus magnus) protein is Elongation factor G.